The chain runs to 175 residues: Universal stress protein A-like protein (175 aa).

Residues alanine 11, valine 12, asparagine 13, serine 26, cysteine 27, valine 53, glycine 131, arginine 133, threonine 145, valine 146, and serine 147 each contribute to the AMP site.

This sequence belongs to the universal stress protein A family. In terms of assembly, homohexamer.

This Arabidopsis thaliana (Mouse-ear cress) protein is Universal stress protein A-like protein.